The primary structure comprises 494 residues: Aspartyl/glutamyl-tRNA(Asn/Gln) amidotransferase subunit B (494 aa).

The protein belongs to the GatB/GatE family. GatB subfamily. Heterotrimer of A, B and C subunits.

The catalysed reaction is L-glutamyl-tRNA(Gln) + L-glutamine + ATP + H2O = L-glutaminyl-tRNA(Gln) + L-glutamate + ADP + phosphate + H(+). It catalyses the reaction L-aspartyl-tRNA(Asn) + L-glutamine + ATP + H2O = L-asparaginyl-tRNA(Asn) + L-glutamate + ADP + phosphate + 2 H(+). Its function is as follows. Allows the formation of correctly charged Asn-tRNA(Asn) or Gln-tRNA(Gln) through the transamidation of misacylated Asp-tRNA(Asn) or Glu-tRNA(Gln) in organisms which lack either or both of asparaginyl-tRNA or glutaminyl-tRNA synthetases. The reaction takes place in the presence of glutamine and ATP through an activated phospho-Asp-tRNA(Asn) or phospho-Glu-tRNA(Gln). The sequence is that of Aspartyl/glutamyl-tRNA(Asn/Gln) amidotransferase subunit B from Nitrobacter winogradskyi (strain ATCC 25391 / DSM 10237 / CIP 104748 / NCIMB 11846 / Nb-255).